A 178-amino-acid chain; its full sequence is Acireductone dioxygenase (178 aa).

Fe(2+) contacts are provided by His100, His102, Glu106, and His145. Ni(2+) contacts are provided by His100, His102, Glu106, and His145.

It belongs to the acireductone dioxygenase (ARD) family. As to quaternary structure, monomer. It depends on Fe(2+) as a cofactor. The cofactor is Ni(2+).

It catalyses the reaction 1,2-dihydroxy-5-(methylsulfanyl)pent-1-en-3-one + O2 = 3-(methylsulfanyl)propanoate + CO + formate + 2 H(+). The enzyme catalyses 1,2-dihydroxy-5-(methylsulfanyl)pent-1-en-3-one + O2 = 4-methylsulfanyl-2-oxobutanoate + formate + 2 H(+). Its pathway is amino-acid biosynthesis; L-methionine biosynthesis via salvage pathway; L-methionine from S-methyl-5-thio-alpha-D-ribose 1-phosphate: step 5/6. Functionally, catalyzes 2 different reactions between oxygen and the acireductone 1,2-dihydroxy-3-keto-5-methylthiopentene (DHK-MTPene) depending upon the metal bound in the active site. Fe-containing acireductone dioxygenase (Fe-ARD) produces formate and 2-keto-4-methylthiobutyrate (KMTB), the alpha-ketoacid precursor of methionine in the methionine recycle pathway. Ni-containing acireductone dioxygenase (Ni-ARD) produces methylthiopropionate, carbon monoxide and formate, and does not lie on the methionine recycle pathway. The protein is Acireductone dioxygenase (mtnD) of Bacillus subtilis (strain 168).